The primary structure comprises 311 residues: Methionyl-tRNA formyltransferase (311 aa).

Residue 108-111 (SILP) participates in (6S)-5,6,7,8-tetrahydrofolate binding.

This sequence belongs to the Fmt family.

The catalysed reaction is L-methionyl-tRNA(fMet) + (6R)-10-formyltetrahydrofolate = N-formyl-L-methionyl-tRNA(fMet) + (6S)-5,6,7,8-tetrahydrofolate + H(+). Functionally, attaches a formyl group to the free amino group of methionyl-tRNA(fMet). The formyl group appears to play a dual role in the initiator identity of N-formylmethionyl-tRNA by promoting its recognition by IF2 and preventing the misappropriation of this tRNA by the elongation apparatus. In Sorangium cellulosum (strain So ce56) (Polyangium cellulosum (strain So ce56)), this protein is Methionyl-tRNA formyltransferase.